The sequence spans 618 residues: COMPASS component cclA (618 aa).

Positions 1–91 are disordered; sequence MSSIQPVGSS…KKAAVAPNSA (91 aa). 2 stretches are compositionally biased toward low complexity: residues 8–19 and 37–49; these read GSSGPSSNINSP and NARS…SNAS. Over residues 57–69 the composition is skewed to basic residues; that stretch reads SKRNKRDSRKKRE. The region spanning 157–368 is the B30.2/SPRY domain; the sequence is IADPGFPHIK…QSNVFSTKHL (212 aa). The segment at 588 to 618 is disordered; it reads TLSVGHEGSPNPATPSAPLENTVPTEDVEMS.

Belongs to the cclA family. Component of the COMPASS complex.

It localises to the nucleus. The protein localises to the chromosome. The protein resides in the telomere. Its function is as follows. Component of the COMPASS (Set1C) complex that specifically mono-, di- and trimethylates histone H3 to form H3K4me1/2/3, which subsequently plays a role in telomere length maintenance and transcription elongation regulation. Controls the production of several secondary metabolites, including gliotoxin, but does not contribute to pathogenicity. This chain is COMPASS component cclA, found in Aspergillus fumigatus (strain ATCC MYA-4609 / CBS 101355 / FGSC A1100 / Af293) (Neosartorya fumigata).